The primary structure comprises 260 residues: Acetylglutamate kinase (260 aa).

Substrate is bound by residues 41 to 42 (GG), Arg63, and Asn157.

The protein belongs to the acetylglutamate kinase family. ArgB subfamily.

Its subcellular location is the cytoplasm. It catalyses the reaction N-acetyl-L-glutamate + ATP = N-acetyl-L-glutamyl 5-phosphate + ADP. It functions in the pathway amino-acid biosynthesis; L-arginine biosynthesis; N(2)-acetyl-L-ornithine from L-glutamate: step 2/4. Catalyzes the ATP-dependent phosphorylation of N-acetyl-L-glutamate. This Acidobacterium capsulatum (strain ATCC 51196 / DSM 11244 / BCRC 80197 / JCM 7670 / NBRC 15755 / NCIMB 13165 / 161) protein is Acetylglutamate kinase.